Reading from the N-terminus, the 470-residue chain is Nuclear receptor ROR-beta (470 aa).

A DNA-binding region (nuclear receptor) is located at residues 18–93 (VIPCKICGDK…LGMSRDAVKF (76 aa)). NR C4-type zinc fingers lie at residues 21-41 (CKICGDKSSGIHYGVITCEGC) and 57-81 (CPRQRNCLIDRTNRNRCQHCRLQKC). Basic and acidic residues predominate over residues 104–117 (LYAEVQKHQQRLQE). The segment at 104-127 (LYAEVQKHQQRLQEQRQQQSGEAE) is disordered. The NR LBD domain occupies 222-460 (EIDRIAQNII…TLFPPLYKEL (239 aa)). Positions 456-461 (LYKELF) match the AF-2 motif.

It belongs to the nuclear hormone receptor family. NR1 subfamily. In terms of assembly, monomer. Interacts with CRX.

The protein resides in the nucleus. Its subcellular location is the nucleoplasm. Its function is as follows. Nuclear receptor that binds DNA as a monomer to ROR response elements (RORE) containing a single core motif half-site 5'-AGGTCA-3' preceded by a short A-T-rich sequence. Considered to have intrinsic transcriptional activity, have some natural ligands such as all-trans retinoic acid (ATRA) and other retinoids which act as inverse agonists repressing the transcriptional activity. Required for normal postnatal development of rod and cone photoreceptor cells. Modulates rod photoreceptors differentiation at least by inducing the transcription factor NRL-mediated pathway. In cone photoreceptor cells, regulates transcription of OPN1SW. Involved in the regulation of the period length and stability of the circadian rhythm. May control cytoarchitectural patterning of neocortical neurons during development. May act in a dose-dependent manner to regulate barrel formation upon innervation of layer IV neurons by thalamocortical axons. May play a role in the suppression of osteoblastic differentiation through the inhibition of RUNX2 transcriptional activity. Isoform 1 is critical for hindlimb motor control and for the differentiation of amacrine and horizontal cells in the retina. Regulates the expression of PTF1A synergistically with FOXN4. The protein is Nuclear receptor ROR-beta (RORB) of Homo sapiens (Human).